A 126-amino-acid polypeptide reads, in one-letter code: MRHYEIVFMVHPDQSEQVAGMIERYTGSITEAGGTIHRLEDWGRRQMAYPINKLHKAHYVLMNVESEQAVIDELETAFRYNDAVLRNMIMRTKAAITEPSVMMKAKEERSAKREDAAPRAEEAAAE.

The interval 101-126 (VMMKAKEERSAKREDAAPRAEEAAAE) is disordered. Basic and acidic residues predominate over residues 104 to 126 (KAKEERSAKREDAAPRAEEAAAE).

This sequence belongs to the bacterial ribosomal protein bS6 family.

Its function is as follows. Binds together with bS18 to 16S ribosomal RNA. The sequence is that of Small ribosomal subunit protein bS6 from Aliivibrio fischeri (strain ATCC 700601 / ES114) (Vibrio fischeri).